The sequence spans 201 residues: Peptidyl-tRNA hydrolase (201 aa).

Tyr14 serves as a coordination point for tRNA. The Proton acceptor role is filled by His19. Residues Phe64, Asn66, and Asn112 each coordinate tRNA.

This sequence belongs to the PTH family. In terms of assembly, monomer.

Its subcellular location is the cytoplasm. The enzyme catalyses an N-acyl-L-alpha-aminoacyl-tRNA + H2O = an N-acyl-L-amino acid + a tRNA + H(+). In terms of biological role, hydrolyzes ribosome-free peptidyl-tRNAs (with 1 or more amino acids incorporated), which drop off the ribosome during protein synthesis, or as a result of ribosome stalling. Catalyzes the release of premature peptidyl moieties from peptidyl-tRNA molecules trapped in stalled 50S ribosomal subunits, and thus maintains levels of free tRNAs and 50S ribosomes. The sequence is that of Peptidyl-tRNA hydrolase from Rhodopseudomonas palustris (strain BisA53).